A 148-amino-acid polypeptide reads, in one-letter code: 3-dehydroquinate dehydratase (148 aa).

Tyr-23 (proton acceptor) is an active-site residue. Positions 75, 81, and 88 each coordinate substrate. His-101 functions as the Proton donor in the catalytic mechanism. Substrate contacts are provided by residues 102 to 103 (IS) and Arg-112.

Belongs to the type-II 3-dehydroquinase family. In terms of assembly, homododecamer.

It carries out the reaction 3-dehydroquinate = 3-dehydroshikimate + H2O. Its pathway is metabolic intermediate biosynthesis; chorismate biosynthesis; chorismate from D-erythrose 4-phosphate and phosphoenolpyruvate: step 3/7. Functionally, catalyzes a trans-dehydration via an enolate intermediate. The protein is 3-dehydroquinate dehydratase of Methylococcus capsulatus (strain ATCC 33009 / NCIMB 11132 / Bath).